The following is a 528-amino-acid chain: GMP synthase [glutamine-hydrolyzing] (528 aa).

One can recognise a Glutamine amidotransferase type-1 domain in the interval 13–204; that stretch reads AIVILDFGSQ…VYDICSCEPD (192 aa). Cysteine 90 functions as the Nucleophile in the catalytic mechanism. Active-site residues include histidine 178 and glutamate 180. Residues 205–403 form the GMPS ATP-PPase domain; the sequence is WTTNLFIDEA…LGLPDEIVRR (199 aa). 232 to 238 is an ATP binding site; it reads SGGVDSS.

As to quaternary structure, homodimer.

The catalysed reaction is XMP + L-glutamine + ATP + H2O = GMP + L-glutamate + AMP + diphosphate + 2 H(+). It functions in the pathway purine metabolism; GMP biosynthesis; GMP from XMP (L-Gln route): step 1/1. Catalyzes the synthesis of GMP from XMP. This is GMP synthase [glutamine-hydrolyzing] from Prochlorococcus marinus (strain NATL1A).